The sequence spans 513 residues: MQLNPSEISDLIKTRIEGLKAGADAKNTGTVISVTDGICRIHGLSGVMQGEMLEFPGNTFGLALNLERDSVGAVVLGEYEHISEGDEVKCTGRILEVPVGPELLGRVVNALGQPIDGKGPINAKKTDVIEKVAPGVIARQSVSQPVQTGLKSIDAMVPIGRGQRELIIGDRQTGKTAVAVDAIINQKGKGIFCVYVAIGQKASTIANVVRKLEEHGALEYTIVVAAAASDSAAMQYLSAYAGCTMGEYFRDRGEDALIVYDDLTKQAWAYRQVSLLLRRPPGREAYPGDVFYLHSRLLERAARVNAEHIEKITNGEVKGKTGSLTALPVIETQAGDVSAFVPTNVISITDGQIFLETDLFNAGVRPAINAGISVSRVGGAAQTKVIKKLSGGIRTDLAQYRELAAFAQFASDLDEATRKQLERGRRVTELLKQPQYQPLQVWQLAASLYAANNGFLDNVDVKDILAFEKGLHDTLKTKYADLINRIEDTKDLSKDDEAALRAAIEDFKKSAAF.

169-176 provides a ligand contact to ATP; the sequence is GDRQTGKT.

The protein belongs to the ATPase alpha/beta chains family. As to quaternary structure, F-type ATPases have 2 components, CF(1) - the catalytic core - and CF(0) - the membrane proton channel. CF(1) has five subunits: alpha(3), beta(3), gamma(1), delta(1), epsilon(1). CF(0) has three main subunits: a(1), b(2) and c(9-12). The alpha and beta chains form an alternating ring which encloses part of the gamma chain. CF(1) is attached to CF(0) by a central stalk formed by the gamma and epsilon chains, while a peripheral stalk is formed by the delta and b chains.

It localises to the cell inner membrane. The enzyme catalyses ATP + H2O + 4 H(+)(in) = ADP + phosphate + 5 H(+)(out). Functionally, produces ATP from ADP in the presence of a proton gradient across the membrane. The alpha chain is a regulatory subunit. The protein is ATP synthase subunit alpha of Ralstonia pickettii (strain 12J).